The primary structure comprises 766 residues: MAIAETDTEVHTPFEQDFEKDVAATQRYFDSSRFAGIIRLYTARQVVEQRGTIPVDHIVAREAAGAFYERLRELFAARKSITTFGPYSPGQAVSMKRMGIEAIYLGGWATSAKGSSTEDPGPDLASYPLSQVPDDAAVLVRALLTADRNQHYLRLQMSERQRAATPAYDFRPFIIADADTGHGGDPHVRNLIRRFVEVGVPGYHIEDQRPGTKKCGHQGGKVLVPSDEQIKRLNAARFQLDIMRVPGIIVARTDAEAANLIDSRADERDQPFLLGATKLDVPSYKSCFLAMVRRFYELGVKELNGHLLYALGDSEYAAAGGWLERQGIFGLVSDAVNAWREDGQQSIDGIFDQVESRFVAAWEDDAGLMTYGEAVADVLEFGQSEGEPIGMAPEEWRAFAARASLHAARAKAKELGADPPWDCELAKTPEGYYQIRGGIPYAIAKSLAAAPFADILWMETKTADLADARQFAEAIHAEFPDQMLAYNLSPSFNWDTTGMTDEEMRRFPEELGKMGFVFNFITYGGHQIDGVAAEEFATALRQDGMLALARLQRKMRLVESPYRTPQTLVGGPRSDAALAASSGRTATTKAMGKGSTQHQHLVQTEVPRKLLEEWLAMWSGHYQLKDKLRVQLRPQRAGSEVLELGIHGESDDKLANVIFQPIQDRRGRTILLVRDQNTFGAELRQKRLMTLIHLWLVHRFKAQAVHYVTPTDDNLYQTSKMKSHGIFTEVNQEVGEIIVAEVNHPRIAELLTPDRVALRKLITKEA.

106 to 108 (GGW) lines the substrate pocket. Asp-177 serves as a coordination point for Mg(2+). Catalysis depends on Cys-215, which acts as the Proton acceptor. Residues 216–217 (GH), Arg-252, 487–491 (NLSPS), and Thr-522 each bind substrate.

This sequence belongs to the isocitrate lyase/PEP mutase superfamily. Isocitrate lyase family. It depends on Mg(2+) as a cofactor.

The enzyme catalyses D-threo-isocitrate = glyoxylate + succinate. It participates in carbohydrate metabolism; glyoxylate cycle; (S)-malate from isocitrate: step 1/2. Its function is as follows. Involved in the persistence and virulence of Mycobacterium. Catalyzes the reversible formation of succinate and glyoxylate from isocitrate, a key step of the glyoxylate cycle, which operates as an anaplerotic route for replenishing the tricarboxylic acid cycle during growth on fatty acid substrates. This chain is Isocitrate lyase 2 (aceA), found in Mycobacterium bovis (strain ATCC BAA-935 / AF2122/97).